The sequence spans 212 residues: Outer surface protein C (212 aa).

A signal peptide spans 1 to 18; that stretch reads MKKNTLSAILMTLFLFIS. Residue C19 is the site of N-palmitoyl cysteine attachment. C19 is lipidated: S-diacylglycerol cysteine.

The protein belongs to the OspC lipoprotein family. In terms of assembly, homodimer. Interacts with tick Ixodes ricinus salivary protein Iric-1. Binds human (host) plasminogen. Post-translationally, the N-terminus is blocked.

It localises to the cell outer membrane. It is found in the cell surface. In terms of biological role, major immunodominant protein in mammalian hosts. Required for initial stages of mammalian infection. Inhibits macrophage-mediated phagocytosis of the bacteria. Binds human plasminogen; this probably confers an extracellular protease activity on the bacteria that allows it to traverse tissue. Unlike closely related strain B31, its interaction with Ixodes ricinus salivary protein Iric-1 does not protect against antibody-mediated destruction in vitro. The protein is Outer surface protein C of Borreliella afzelii (strain PKo) (Borrelia afzelii).